Reading from the N-terminus, the 389-residue chain is Putative F-box protein At1g47790 (389 aa).

In terms of domain architecture, F-box spans 19-65 (SKPTSSFPLDLASEILLRLPVKSVVRFRCVSKLWSSIITDPYFIKTY).

The protein is Putative F-box protein At1g47790 of Arabidopsis thaliana (Mouse-ear cress).